A 63-amino-acid chain; its full sequence is Large ribosomal subunit protein bL28 (63 aa).

Belongs to the bacterial ribosomal protein bL28 family.

This is Large ribosomal subunit protein bL28 from Petrotoga mobilis (strain DSM 10674 / SJ95).